A 364-amino-acid polypeptide reads, in one-letter code: Pectinesterase 1 (364 aa).

Positions 1-22 (MSCIAVEAVLLGILLYIPIVLS) are cleaved as a signal peptide. Asn-103 carries N-linked (GlcNAc...) asparagine glycosylation. Residue Asp-220 is part of the active site.

It belongs to the pectinesterase family. Post-translationally, glycosylated. As to expression, expressed in pollen.

It is found in the secreted. It carries out the reaction [(1-&gt;4)-alpha-D-galacturonosyl methyl ester](n) + n H2O = [(1-&gt;4)-alpha-D-galacturonosyl](n) + n methanol + n H(+). Its pathway is glycan metabolism; pectin degradation; 2-dehydro-3-deoxy-D-gluconate from pectin: step 1/5. Functionally, catalyzes the demethylesterification of homogalacturonan components of pectin. May be involved in pollen tube development. This chain is Pectinesterase 1, found in Olea europaea (Common olive).